Reading from the N-terminus, the 358-residue chain is Chorismate synthase (358 aa).

Arg46 serves as a coordination point for NADP(+). Residues 123–125 (RSS), 235–236 (NA), Gly275, 290–294 (KPTPS), and Arg316 each bind FMN.

This sequence belongs to the chorismate synthase family. As to quaternary structure, homotetramer. FMNH2 is required as a cofactor.

It carries out the reaction 5-O-(1-carboxyvinyl)-3-phosphoshikimate = chorismate + phosphate. Its pathway is metabolic intermediate biosynthesis; chorismate biosynthesis; chorismate from D-erythrose 4-phosphate and phosphoenolpyruvate: step 7/7. In terms of biological role, catalyzes the anti-1,4-elimination of the C-3 phosphate and the C-6 proR hydrogen from 5-enolpyruvylshikimate-3-phosphate (EPSP) to yield chorismate, which is the branch point compound that serves as the starting substrate for the three terminal pathways of aromatic amino acid biosynthesis. This reaction introduces a second double bond into the aromatic ring system. This is Chorismate synthase from Sulfurimonas denitrificans (strain ATCC 33889 / DSM 1251) (Thiomicrospira denitrificans (strain ATCC 33889 / DSM 1251)).